We begin with the raw amino-acid sequence, 91 residues long: Small ribosomal subunit protein uS19 (91 aa).

This sequence belongs to the universal ribosomal protein uS19 family.

Protein S19 forms a complex with S13 that binds strongly to the 16S ribosomal RNA. In Colwellia psychrerythraea (strain 34H / ATCC BAA-681) (Vibrio psychroerythus), this protein is Small ribosomal subunit protein uS19.